Reading from the N-terminus, the 188-residue chain is Elongation factor P (188 aa).

Belongs to the elongation factor P family.

Its subcellular location is the cytoplasm. It functions in the pathway protein biosynthesis; polypeptide chain elongation. Its function is as follows. Involved in peptide bond synthesis. Stimulates efficient translation and peptide-bond synthesis on native or reconstituted 70S ribosomes in vitro. Probably functions indirectly by altering the affinity of the ribosome for aminoacyl-tRNA, thus increasing their reactivity as acceptors for peptidyl transferase. The protein is Elongation factor P of Chlorobium limicola (strain DSM 245 / NBRC 103803 / 6330).